The chain runs to 239 residues: Phosphoribosylaminoimidazole-succinocarboxamide synthase (239 aa).

The protein belongs to the SAICAR synthetase family.

The enzyme catalyses 5-amino-1-(5-phospho-D-ribosyl)imidazole-4-carboxylate + L-aspartate + ATP = (2S)-2-[5-amino-1-(5-phospho-beta-D-ribosyl)imidazole-4-carboxamido]succinate + ADP + phosphate + 2 H(+). The protein operates within purine metabolism; IMP biosynthesis via de novo pathway; 5-amino-1-(5-phospho-D-ribosyl)imidazole-4-carboxamide from 5-amino-1-(5-phospho-D-ribosyl)imidazole-4-carboxylate: step 1/2. This is Phosphoribosylaminoimidazole-succinocarboxamide synthase from Bacillus cereus (strain AH187).